Here is a 321-residue protein sequence, read N- to C-terminus: Aspartate carbamoyltransferase catalytic subunit (321 aa).

Carbamoyl phosphate contacts are provided by Arg-65 and Thr-66. Residue Lys-93 participates in L-aspartate binding. The carbamoyl phosphate site is built by Arg-115, His-143, and Gln-146. L-aspartate contacts are provided by Arg-176 and Arg-230. Carbamoyl phosphate-binding residues include Gly-271 and Pro-272.

It belongs to the aspartate/ornithine carbamoyltransferase superfamily. ATCase family. In terms of assembly, heterododecamer (2C3:3R2) of six catalytic PyrB chains organized as two trimers (C3), and six regulatory PyrI chains organized as three dimers (R2).

It carries out the reaction carbamoyl phosphate + L-aspartate = N-carbamoyl-L-aspartate + phosphate + H(+). It participates in pyrimidine metabolism; UMP biosynthesis via de novo pathway; (S)-dihydroorotate from bicarbonate: step 2/3. Functionally, catalyzes the condensation of carbamoyl phosphate and aspartate to form carbamoyl aspartate and inorganic phosphate, the committed step in the de novo pyrimidine nucleotide biosynthesis pathway. The chain is Aspartate carbamoyltransferase catalytic subunit from Bartonella tribocorum (strain CIP 105476 / IBS 506).